We begin with the raw amino-acid sequence, 411 residues long: Multidrug resistance protein MdtA (411 aa).

Positions 1 to 26 are cleaved as a signal peptide; that stretch reads MNNNKKTKKRFSLIIILLIVIAGAIA. Over residues 35–55 the composition is skewed to polar residues; the sequence is SAPPVSKDTPTANTPNRSTAG. A disordered region spans residues 35–64; that stretch reads SAPPVSKDTPTANTPNRSTAGSRRPPMPPV.

Belongs to the membrane fusion protein (MFP) (TC 8.A.1) family. In terms of assembly, part of a tripartite efflux system composed of MdtA, MdtB and MdtC.

It localises to the cell inner membrane. This chain is Multidrug resistance protein MdtA, found in Proteus mirabilis (strain HI4320).